A 490-amino-acid chain; its full sequence is Betaine aldehyde dehydrogenase (490 aa).

The K(+) site is built by T26, I27, and D93. G150 to W152 lines the NAD(+) pocket. Residue K162 is the Charge relay system of the active site. Residue K176–E179 coordinates NAD(+). Position 180 (V180) interacts with K(+). NAD(+) is bound at residue G230 to S233. L246 lines the K(+) pocket. E252 acts as the Proton acceptor in catalysis. NAD(+)-binding residues include G254, C286, and E387. The active-site Nucleophile is the C286. C286 is subject to Cysteine sulfenic acid (-SOH). K(+) is bound by residues K457 and G460. E464 functions as the Charge relay system in the catalytic mechanism.

This sequence belongs to the aldehyde dehydrogenase family. Dimer of dimers. The cofactor is K(+).

The enzyme catalyses betaine aldehyde + NAD(+) + H2O = glycine betaine + NADH + 2 H(+). Its pathway is amine and polyamine biosynthesis; betaine biosynthesis via choline pathway; betaine from betaine aldehyde: step 1/1. Its function is as follows. Involved in the biosynthesis of the osmoprotectant glycine betaine. Catalyzes the irreversible oxidation of betaine aldehyde to the corresponding acid. The protein is Betaine aldehyde dehydrogenase of Escherichia coli (strain K12 / DH10B).